A 164-amino-acid chain; its full sequence is Lipoprotein signal peptidase (164 aa).

The next 3 membrane-spanning stretches (helical) occupy residues 12–32, 70–90, and 102–122; these read WLWLVVVVLIIDLGSKYLILQ, WFFAGIAIGISVILAVMMYRS, and ALIIGGALGNLFDRLWHGFVV. Catalysis depends on residues Asp123 and Asp141. The chain crosses the membrane as a helical span at residues 137–157; the sequence is FNLADTAICVGAALIVLEGFL.

The protein belongs to the peptidase A8 family.

The protein localises to the cell inner membrane. It carries out the reaction Release of signal peptides from bacterial membrane prolipoproteins. Hydrolyzes -Xaa-Yaa-Zaa-|-(S,diacylglyceryl)Cys-, in which Xaa is hydrophobic (preferably Leu), and Yaa (Ala or Ser) and Zaa (Gly or Ala) have small, neutral side chains.. It participates in protein modification; lipoprotein biosynthesis (signal peptide cleavage). Its function is as follows. This protein specifically catalyzes the removal of signal peptides from prolipoproteins. The protein is Lipoprotein signal peptidase of Escherichia coli O9:H4 (strain HS).